Consider the following 394-residue polypeptide: MIIKRLNFSCRLFSTASTSTSYEKTPIQPATKCLQLAVIGAPNVGKSLLTNSLIRCPLSAVSSKMDTTTRNISASICSDSTQLVFVDSPGAVSTSHVRQTMKKTSATSGDRVLQDPERALQRAQHVLVVQDSTAPGAYIHHRVLHMLHRYSHVPSILVMNKIDLVMRRSDLLPLVEILTNGQLSDNQQISTKPAQIGRLGKSLSTNIQSSSSFKPSDEKWQSQFRELIQKPTWKCSYSETRSLFRTICGWSGFERVFFVSSLNGEGIDELRDHLMSISPQGEWKMQDGMPTGESAQQLCIDSIRAAVLDTTPSDVAYTVQIRISEWEEQGEVLQIVGEIRCQKPRDGSLIIGKGGKRISEIGRRVNEHLHSLFQRQLYARLIVTHNGKLITQSK.

In terms of domain architecture, Era-type G spans 32-280; sequence KCLQLAVIGA…RDHLMSISPQ (249 aa). The segment at 40 to 47 is G1; sequence GAPNVGKS. 40–47 contributes to the GTP binding site; the sequence is GAPNVGKS. The G2 stretch occupies residues 66 to 70; sequence DTTTR. The segment at 87–90 is G3; sequence DSPG. GTP is bound by residues 87–91 and 160–163; these read DSPGA and NKID. Positions 160 to 163 are G4; the sequence is NKID. Residues 259-261 are G5; it reads VSS.

This sequence belongs to the TRAFAC class TrmE-Era-EngA-EngB-Septin-like GTPase superfamily. Era GTPase family.

It is found in the mitochondrion matrix. It localises to the mitochondrion inner membrane. Probable GTPase that plays a role in the mitochondrial ribosomal small subunit assembly. Specifically binds the 12S mitochondrial rRNA (12S mt-rRNA) to a 33 nucleotide section delineating the 3' terminal stem-loop region. May act as a chaperone that protects the 12S mt-rRNA on the 28S mitoribosomal subunit during ribosomal small subunit assembly. May play a role in positively regulating mitochondrial function. Plays a role in fertility. The chain is GTPase Era, mitochondrial from Caenorhabditis elegans.